Here is a 1050-residue protein sequence, read N- to C-terminus: Probable E3 ubiquitin-protein ligase HERC3 (1050 aa).

RCC1 repeat units follow at residues 1–51, 52–101, 102–154, 156–207, 208–259, 261–311, and 313–366; these read MLCW…FLLE, DGEV…ALSD, RGQL…ALAA, GQFF…ALSL, SGAV…VLTK, GGVF…AFVP, and SGLI…IVKQ. The HECT domain maps to 951–1050; the sequence is YKGDYSATHP…LDNYEGFSLA (100 aa). Cysteine 1018 acts as the Glycyl thioester intermediate in catalysis.

Ubiquitinated; which promotes degradation by the proteasome.

It localises to the cytoplasm. It is found in the cytoplasmic vesicle. The enzyme catalyses S-ubiquitinyl-[E2 ubiquitin-conjugating enzyme]-L-cysteine + [acceptor protein]-L-lysine = [E2 ubiquitin-conjugating enzyme]-L-cysteine + N(6)-ubiquitinyl-[acceptor protein]-L-lysine.. It participates in protein modification; protein ubiquitination. Its function is as follows. E3 ubiquitin-protein ligase which accepts ubiquitin from an E2 ubiquitin-conjugating enzyme in the form of a thioester and then directly transfers the ubiquitin to targeted substrates. The protein is Probable E3 ubiquitin-protein ligase HERC3 (HERC3) of Homo sapiens (Human).